Reading from the N-terminus, the 1019-residue chain is Antigenic heat-stable 120 kDa protein (1019 aa).

The interval 1 to 33 (MSKNDNQDISEFDPLNREFTEAEKQQQMQQEQE) is disordered. The segment covering 14–24 (PLNREFTEAEK) has biased composition (basic and acidic residues).

The protein localises to the cytoplasm. The protein is Antigenic heat-stable 120 kDa protein (sca4) of Rickettsia typhi (strain ATCC VR-144 / Wilmington).